The chain runs to 198 residues: FMN-dependent NADH:quinone oxidoreductase (198 aa).

FMN-binding positions include Ser-10, 16-18 (SQS), 94-97 (MYNF), and 138-141 (TRGG).

This sequence belongs to the azoreductase type 1 family. As to quaternary structure, homodimer. FMN is required as a cofactor.

It catalyses the reaction 2 a quinone + NADH + H(+) = 2 a 1,4-benzosemiquinone + NAD(+). It carries out the reaction N,N-dimethyl-1,4-phenylenediamine + anthranilate + 2 NAD(+) = 2-(4-dimethylaminophenyl)diazenylbenzoate + 2 NADH + 2 H(+). Its function is as follows. Quinone reductase that provides resistance to thiol-specific stress caused by electrophilic quinones. Functionally, also exhibits azoreductase activity. Catalyzes the reductive cleavage of the azo bond in aromatic azo compounds to the corresponding amines. The chain is FMN-dependent NADH:quinone oxidoreductase from Shewanella oneidensis (strain ATCC 700550 / JCM 31522 / CIP 106686 / LMG 19005 / NCIMB 14063 / MR-1).